A 130-amino-acid chain; its full sequence is S-adenosylmethionine decarboxylase proenzyme (130 aa).

Ser-66 (schiff-base intermediate with substrate; via pyruvic acid) is an active-site residue. Position 66 is a pyruvic acid (Ser); by autocatalysis (Ser-66). His-71 (proton acceptor; for processing activity) is an active-site residue. Catalysis depends on Cys-86, which acts as the Proton donor; for catalytic activity.

The protein belongs to the prokaryotic AdoMetDC family. Type 1 subfamily. As to quaternary structure, heterotetramer of two alpha and two beta chains arranged as a dimer of alpha/beta heterodimers. Pyruvate serves as cofactor. In terms of processing, is synthesized initially as an inactive proenzyme. Formation of the active enzyme involves a self-maturation process in which the active site pyruvoyl group is generated from an internal serine residue via an autocatalytic post-translational modification. Two non-identical subunits are generated from the proenzyme in this reaction, and the pyruvate is formed at the N-terminus of the alpha chain, which is derived from the carboxyl end of the proenzyme. The post-translation cleavage follows an unusual pathway, termed non-hydrolytic serinolysis, in which the side chain hydroxyl group of the serine supplies its oxygen atom to form the C-terminus of the beta chain, while the remainder of the serine residue undergoes an oxidative deamination to produce ammonia and the pyruvoyl group blocking the N-terminus of the alpha chain.

It carries out the reaction S-adenosyl-L-methionine + H(+) = S-adenosyl 3-(methylsulfanyl)propylamine + CO2. The protein operates within amine and polyamine biosynthesis; S-adenosylmethioninamine biosynthesis; S-adenosylmethioninamine from S-adenosyl-L-methionine: step 1/1. Its function is as follows. Catalyzes the decarboxylation of S-adenosylmethionine to S-adenosylmethioninamine (dcAdoMet), the propylamine donor required for the synthesis of the polyamines spermine and spermidine from the diamine putrescine. The sequence is that of S-adenosylmethionine decarboxylase proenzyme from Bacillus cereus (strain ATCC 10987 / NRS 248).